We begin with the raw amino-acid sequence, 435 residues long: Homoserine dehydrogenase (435 aa).

Residues T13, V14, and K104 each contribute to the NADPH site. V14 is a binding site for NAD(+). Positions 14 and 104 each coordinate NADP(+). Na(+) is bound by residues E128, V131, G133, and I135. Positions 186 and 189 each coordinate NADP(+). Positions 189 and 200 each coordinate L-homoserine. Catalysis depends on K204, which acts as the Proton donor. G301 is a binding site for NADPH. Residue G301 participates in NAD(+) binding. G301 is a binding site for NADP(+). The ACT domain maps to 354–429; that stretch reads YLRVQAKDEP…CVEKPITMIR (76 aa).

It belongs to the homoserine dehydrogenase family. In terms of assembly, homotetramer. The cofactor is a metal cation.

It catalyses the reaction L-homoserine + NAD(+) = L-aspartate 4-semialdehyde + NADH + H(+). The protein operates within amino-acid biosynthesis; L-methionine biosynthesis via de novo pathway; L-homoserine from L-aspartate: step 3/3. It functions in the pathway amino-acid biosynthesis; L-threonine biosynthesis; L-threonine from L-aspartate: step 3/5. Its activity is regulated as follows. Neither NaCl nor KCl increase the activity. L-threonine and L-serine do not markedly inhibit the oxidation activity. Functionally, catalyzes the conversion of L-aspartate-beta-semialdehyde (L-Asa) to L-homoserine (L-Hse), the third step in the biosynthesis of threonine and methionine from aspartate. Is highly specific for NAD(+), and displays an approximate 479-fold (kcat/Km) preference for NAD(+) over NADP(+). In Neisseria gonorrhoeae (strain ATCC 700825 / FA 1090), this protein is Homoserine dehydrogenase.